The following is a 318-amino-acid chain: DNA primase small subunit PriS (318 aa).

Residues Asp95, Asp97, and Asp224 contribute to the active site.

This sequence belongs to the eukaryotic-type primase small subunit family. In terms of assembly, heterodimer of a small subunit (PriS) and a large subunit (PriL). Mg(2+) serves as cofactor. Mn(2+) is required as a cofactor.

In terms of biological role, catalytic subunit of DNA primase, an RNA polymerase that catalyzes the synthesis of short RNA molecules used as primers for DNA polymerase during DNA replication. The small subunit contains the primase catalytic core and has DNA synthesis activity on its own. Binding to the large subunit stabilizes and modulates the activity, increasing the rate of DNA synthesis while decreasing the length of the DNA fragments, and conferring RNA synthesis capability. The DNA polymerase activity may enable DNA primase to also catalyze primer extension after primer synthesis. May also play a role in DNA repair. The sequence is that of DNA primase small subunit PriS from Sulfurisphaera tokodaii (strain DSM 16993 / JCM 10545 / NBRC 100140 / 7) (Sulfolobus tokodaii).